Here is a 357-residue protein sequence, read N- to C-terminus: Chorismate synthase (357 aa).

Arginine 47 contacts NADP(+). FMN contacts are provided by residues 123 to 125 (RAS), glycine 281, 296 to 300 (KPTSS), and arginine 324.

The protein belongs to the chorismate synthase family. In terms of assembly, homotetramer. FMNH2 serves as cofactor.

The catalysed reaction is 5-O-(1-carboxyvinyl)-3-phosphoshikimate = chorismate + phosphate. The protein operates within metabolic intermediate biosynthesis; chorismate biosynthesis; chorismate from D-erythrose 4-phosphate and phosphoenolpyruvate: step 7/7. Its function is as follows. Catalyzes the anti-1,4-elimination of the C-3 phosphate and the C-6 proR hydrogen from 5-enolpyruvylshikimate-3-phosphate (EPSP) to yield chorismate, which is the branch point compound that serves as the starting substrate for the three terminal pathways of aromatic amino acid biosynthesis. This reaction introduces a second double bond into the aromatic ring system. This Chlamydia trachomatis serovar D (strain ATCC VR-885 / DSM 19411 / UW-3/Cx) protein is Chorismate synthase.